We begin with the raw amino-acid sequence, 172 residues long: Adenine phosphoribosyltransferase (172 aa).

It belongs to the purine/pyrimidine phosphoribosyltransferase family. In terms of assembly, homodimer.

Its subcellular location is the cytoplasm. The catalysed reaction is AMP + diphosphate = 5-phospho-alpha-D-ribose 1-diphosphate + adenine. It participates in purine metabolism; AMP biosynthesis via salvage pathway; AMP from adenine: step 1/1. Its function is as follows. Catalyzes a salvage reaction resulting in the formation of AMP, that is energically less costly than de novo synthesis. This Streptococcus uberis (strain ATCC BAA-854 / 0140J) protein is Adenine phosphoribosyltransferase.